A 361-amino-acid polypeptide reads, in one-letter code: Phosphoserine aminotransferase (361 aa).

L-glutamate-binding residues include Ser-9 and Arg-42. Pyridoxal 5'-phosphate is bound by residues 76-77 (AR), Trp-102, Thr-153, Asp-173, and Gln-196. Lys-197 carries the post-translational modification N6-(pyridoxal phosphate)lysine. 238–239 (NT) lines the pyridoxal 5'-phosphate pocket.

This sequence belongs to the class-V pyridoxal-phosphate-dependent aminotransferase family. SerC subfamily. In terms of assembly, homodimer. Pyridoxal 5'-phosphate serves as cofactor.

The protein resides in the cytoplasm. It catalyses the reaction O-phospho-L-serine + 2-oxoglutarate = 3-phosphooxypyruvate + L-glutamate. The enzyme catalyses 4-(phosphooxy)-L-threonine + 2-oxoglutarate = (R)-3-hydroxy-2-oxo-4-phosphooxybutanoate + L-glutamate. It participates in amino-acid biosynthesis; L-serine biosynthesis; L-serine from 3-phospho-D-glycerate: step 2/3. It functions in the pathway cofactor biosynthesis; pyridoxine 5'-phosphate biosynthesis; pyridoxine 5'-phosphate from D-erythrose 4-phosphate: step 3/5. In terms of biological role, catalyzes the reversible conversion of 3-phosphohydroxypyruvate to phosphoserine and of 3-hydroxy-2-oxo-4-phosphonooxybutanoate to phosphohydroxythreonine. In Serratia proteamaculans (strain 568), this protein is Phosphoserine aminotransferase.